Here is a 433-residue protein sequence, read N- to C-terminus: Homogentisate 1,2-dioxygenase (433 aa).

Catalysis depends on histidine 288, which acts as the Proton acceptor. Positions 331 and 337 each coordinate Fe cation. Homogentisate is bound by residues tyrosine 346 and histidine 367. Position 367 (histidine 367) interacts with Fe cation.

It belongs to the homogentisate dioxygenase family. As to quaternary structure, hexamer; dimer of trimers. Fe cation serves as cofactor.

It carries out the reaction homogentisate + O2 = 4-maleylacetoacetate + H(+). Its pathway is amino-acid degradation; L-phenylalanine degradation; acetoacetate and fumarate from L-phenylalanine: step 4/6. Involved in the catabolism of homogentisate (2,5-dihydroxyphenylacetate or 2,5-OH-PhAc), a central intermediate in the degradation of phenylalanine and tyrosine. Catalyzes the oxidative ring cleavage of the aromatic ring of homogentisate to yield maleylacetoacetate. This Pseudomonas putida (strain W619) protein is Homogentisate 1,2-dioxygenase.